Consider the following 1217-residue polypeptide: ATP-dependent helicase/nuclease subunit A (1217 aa).

One can recognise a UvrD-like helicase ATP-binding domain in the interval 10–475 (VIWTDAQWQS…IDLSQNFRSR (466 aa)). 31 to 38 (AAAGSGKT) lines the ATP pocket. In terms of domain architecture, UvrD-like helicase C-terminal spans 476–786 (KEVLSTTNYI…RMMTIHSSKG (311 aa)).

It belongs to the helicase family. AddA subfamily. In terms of assembly, heterodimer of AddA and AddB/RexB. Requires Mg(2+) as cofactor.

The catalysed reaction is Couples ATP hydrolysis with the unwinding of duplex DNA by translocating in the 3'-5' direction.. It carries out the reaction ATP + H2O = ADP + phosphate + H(+). Its function is as follows. The heterodimer acts as both an ATP-dependent DNA helicase and an ATP-dependent, dual-direction single-stranded exonuclease. Recognizes the chi site generating a DNA molecule suitable for the initiation of homologous recombination. The AddA nuclease domain is required for chi fragment generation; this subunit has the helicase and 3' -&gt; 5' nuclease activities. The sequence is that of ATP-dependent helicase/nuclease subunit A from Staphylococcus aureus (strain MRSA252).